The chain runs to 1506 residues: DDB1- and CUL4-associated factor 1 (1506 aa).

Residues 141-499 (QPLRTYSTGL…STLEILNLED (359 aa)) are protein kinase-like. Residues S202 and S254 each carry the phosphoserine modification. Residues 241–275 (RLDSSHKTSSRVNSATKPEEGGLKKNKSAKHGDRE) are disordered. One can recognise a Chromo domain in the interval 561-592 (SYTHEQIVEMMEFLIEYGPAQLYWEPAEVFLK). At K700 the chain carries N6-acetyllysine. Position 827 is a phosphoserine (S827). In terms of domain architecture, LisH spans 845 to 877 (PEKELLLLIRNHLISKGLGETATVLTREADLPM). Position 887 is a phosphothreonine (T887). Phosphoserine occurs at positions 894 and 897. 2 disordered regions span residues 916–946 (ATVG…GPSY) and 977–999 (KSDH…HLPS). The segment covering 924 to 943 (SAPPAHPPPRPPQGSLPLPG) has biased composition (pro residues). Phosphoserine is present on residues S978 and S999. 5 WD repeats span residues 1090-1129 (EDES…EEAS), 1132-1173 (CHNS…DMKH), 1175-1212 (FTED…KLLT), 1214-1246 (FNPD…WDVR), and 1247-1289 (SAQA…LLHT). The interval 1090–1289 (EDESGFTCCA…DLRTFHLLHT (200 aa)) is WD repeat-like region. Short sequence motifs (DWD box) lie at residues 1241–1248 (VLWDVRSA) and 1277–1284 (EIWDLRTF). A Phosphoserine modification is found at S1327. The tract at residues 1392–1506 (RLAEDEDEEE…EDDIILSLNE (115 aa)) is disordered. 2 stretches are compositionally biased toward acidic residues: residues 1395–1482 (EDED…EEVE) and 1489–1500 (DSSDNSDLEDDI). Residues 1417–1506 (DDDTDDLDEL…EDDIILSLNE (90 aa)) are interaction with NF2.

This sequence belongs to the VPRBP/DCAF1 family. Component of the DCX (DDB1-CUL4-X-box) E3 ubiquitin-protein ligase complex, named CUL4A-RBX1-DDB1-DCAF1/VPRBP complex. Interacts with DDB1; the interaction is direct. Also forms a ternary complex with DDA1 and DDB1. Interacts with NF2 (via FERM domain). Component of the EDVP complex, a E3 ligase complex containing DYRK2, EDD/UBR5, DDB1 and DCAF1. Interacts with DYRK2; the interaction is direct. Interacts with RAG1; the interaction is direct. Interacts with LLGL1 and LLGL2. Interacts with histone H3. Interacts with ESR1 and LATS1; probably recruited by LATS1 to promote ESR1 ubiquitination and ubiquitin-mediated proteasomal degradation. Directly interacts with TET1, TET2 and TET3 (via C-terminus). Interacts with CEP78; promoting DCAF1 localization to centrosomes. Widely expressed. Expressed in oocytes and zygotes (at protein level).

The protein resides in the cytoplasm. The protein localises to the nucleus. It localises to the cytoskeleton. It is found in the microtubule organizing center. Its subcellular location is the centrosome. It carries out the reaction L-seryl-[protein] + ATP = O-phospho-L-seryl-[protein] + ADP + H(+). The enzyme catalyses L-threonyl-[protein] + ATP = O-phospho-L-threonyl-[protein] + ADP + H(+). It functions in the pathway protein modification; protein ubiquitination. In terms of biological role, acts both as a substrate recognition component of E3 ubiquitin-protein ligase complexes and as an atypical serine/threonine-protein kinase, playing key roles in various processes such as cell cycle, telomerase regulation and histone modification. Probable substrate-specific adapter of a DCX (DDB1-CUL4-X-box) E3 ubiquitin-protein ligase complex, named CUL4A-RBX1-DDB1-DCAF1/VPRBP complex, which mediates ubiquitination and proteasome-dependent degradation of proteins such as NF2. Involved in the turnover of methylated proteins: recognizes and binds methylated proteins via its chromo domain, leading to ubiquitination of target proteins by the RBX1-DDB1-DCAF1/VPRBP complex. The CUL4A-RBX1-DDB1-DCAF1/VPRBP complex is also involved in B-cell development: DCAF1 is recruited by RAG1 to ubiquitinate proteins, leading to limit error-prone repair during V(D)J recombination. Also part of the EDVP complex, an E3 ligase complex that mediates ubiquitination of proteins such as TERT, leading to TERT degradation and telomerase inhibition. The EDVP complex also mediates ubiquitination and degradation of CCP110. Also acts as an atypical serine/threonine-protein kinase that specifically mediates phosphorylation of 'Thr-120' of histone H2A (H2AT120ph) in a nucleosomal context, thereby repressing transcription. H2AT120ph is present in the regulatory region of many tumor suppresor genes, down-regulates their transcription and is present at high level in a number of tumors. Involved in JNK-mediated apoptosis during cell competition process via its interaction with LLGL1 and LLGL2. By acting on TET dioxygenses, essential for oocyte maintenance at the primordial follicle stage, hence essential for female fertility. In Mus musculus (Mouse), this protein is DDB1- and CUL4-associated factor 1.